The sequence spans 207 residues: Holliday junction branch migration complex subunit RuvA (207 aa).

The interval 1–63 (MIDSLHGEVL…DDGIDLYAFE (63 aa)) is domain I. Residues 64-142 (SDEARQMFAM…VFDSGDSASE (79 aa)) form a domain II region. Residues 143–154 (PQSGVGGNSEAE) form a flexible linker region. The tract at residues 155–207 (VDSGVVGTVTQALVELGFPEKQAEKTATSAAAEGGSVSEILKRALRSMSSERN) is domain III.

This sequence belongs to the RuvA family. As to quaternary structure, homotetramer. Forms an RuvA(8)-RuvB(12)-Holliday junction (HJ) complex. HJ DNA is sandwiched between 2 RuvA tetramers; dsDNA enters through RuvA and exits via RuvB. An RuvB hexamer assembles on each DNA strand where it exits the tetramer. Each RuvB hexamer is contacted by two RuvA subunits (via domain III) on 2 adjacent RuvB subunits; this complex drives branch migration. In the full resolvosome a probable DNA-RuvA(4)-RuvB(12)-RuvC(2) complex forms which resolves the HJ.

The protein localises to the cytoplasm. The RuvA-RuvB-RuvC complex processes Holliday junction (HJ) DNA during genetic recombination and DNA repair, while the RuvA-RuvB complex plays an important role in the rescue of blocked DNA replication forks via replication fork reversal (RFR). RuvA specifically binds to HJ cruciform DNA, conferring on it an open structure. The RuvB hexamer acts as an ATP-dependent pump, pulling dsDNA into and through the RuvAB complex. HJ branch migration allows RuvC to scan DNA until it finds its consensus sequence, where it cleaves and resolves the cruciform DNA. This Corynebacterium kroppenstedtii (strain DSM 44385 / JCM 11950 / CIP 105744 / CCUG 35717) protein is Holliday junction branch migration complex subunit RuvA.